We begin with the raw amino-acid sequence, 196 residues long: Dimiconin (196 aa).

A signal peptide spans M1–G21. N-linked (GlcNAc...) asparagine glycosylation is found at N62 and N187.

This sequence belongs to the calycin superfamily. Triabin family. Salivary gland.

The protein resides in the secreted. Inhibits the intrinsic blood coagulation pathway by blocking the activation of host coagulation factor XII (F12) but not the enzymatic activity of activated F12. In Triatoma dimidiata (Kissing bug), this protein is Dimiconin.